A 229-amino-acid chain; its full sequence is Large ribosomal subunit protein uL1 (229 aa).

This sequence belongs to the universal ribosomal protein uL1 family. As to quaternary structure, part of the 50S ribosomal subunit.

Functionally, binds directly to 23S rRNA. The L1 stalk is quite mobile in the ribosome, and is involved in E site tRNA release. In terms of biological role, protein L1 is also a translational repressor protein, it controls the translation of the L11 operon by binding to its mRNA. The polypeptide is Large ribosomal subunit protein uL1 (Lactiplantibacillus plantarum (strain ATCC BAA-793 / NCIMB 8826 / WCFS1) (Lactobacillus plantarum)).